A 170-amino-acid polypeptide reads, in one-letter code: Alpha-crystallin A chain (170 aa).

M1 is modified (N-acetylmethionine). Positions 1–63 (MDVTIQHPWF…RTVLDSGISE (63 aa)) are required for complex formation with BFSP1 and BFSP2. The residue at position 6 (Q6) is a Deamidated glutamine; partial. The residue at position 45 (S45) is a Phosphoserine. Q50 bears the Deamidated glutamine; partial mark. In terms of domain architecture, sHSP spans 52-161 (LFRTVLDSGI…SERTIPVSRE (110 aa)). K70 and K99 each carry N6-acetyllysine. H100 is a binding site for Zn(2+). Deamidated asparagine; partial is present on N101. Positions 102, 107, and 151 each coordinate Zn(2+). The interval 144 to 170 (PKIVDPSHSERTIPVSREEKPSSAPSS) is disordered. The span at 148-164 (DPSHSERTIPVSREEKP) shows a compositional bias: basic and acidic residues. S159 carries O-linked (GlcNAc) serine glycosylation.

This sequence belongs to the small heat shock protein (HSP20) family. Heteromer composed of three CRYAA and one CRYAB subunits. Inter-subunit bridging via zinc ions enhances stability, which is crucial as there is no protein turn over in the lens. Can also form homodimers and homotetramers (dimers of dimers) which serve as the building blocks of homooligomers. Within homooligomers, the zinc-binding motif is created from residues of 3 different molecules. His-100 and Glu-102 from one molecule are ligands of the zinc ion, and His-107 and His-151 residues from additional molecules complete the site with tetrahedral coordination geometry. Part of a complex required for lens intermediate filament formation composed of BFSP1, BFSP2 and CRYAA. Acetylation at Lys-70 may increase chaperone activity. In terms of processing, undergoes age-dependent proteolytical cleavage at the C-terminus.

The protein resides in the cytoplasm. Its subcellular location is the nucleus. In terms of biological role, contributes to the transparency and refractive index of the lens. Acts as a chaperone, preventing aggregation of various proteins under a wide range of stress conditions. Required for the correct formation of lens intermediate filaments as part of a complex composed of BFSP1, BFSP2 and CRYAA. The sequence is that of Alpha-crystallin A chain (CRYAA) from Choloepus hoffmanni (Hoffmann's two-fingered sloth).